The following is a 177-amino-acid chain: ATP synthase subunit delta (177 aa).

Belongs to the ATPase delta chain family. In terms of assembly, F-type ATPases have 2 components, F(1) - the catalytic core - and F(0) - the membrane proton channel. F(1) has five subunits: alpha(3), beta(3), gamma(1), delta(1), epsilon(1). F(0) has three main subunits: a(1), b(2) and c(10-14). The alpha and beta chains form an alternating ring which encloses part of the gamma chain. F(1) is attached to F(0) by a central stalk formed by the gamma and epsilon chains, while a peripheral stalk is formed by the delta and b chains.

It is found in the cell inner membrane. In terms of biological role, f(1)F(0) ATP synthase produces ATP from ADP in the presence of a proton or sodium gradient. F-type ATPases consist of two structural domains, F(1) containing the extramembraneous catalytic core and F(0) containing the membrane proton channel, linked together by a central stalk and a peripheral stalk. During catalysis, ATP synthesis in the catalytic domain of F(1) is coupled via a rotary mechanism of the central stalk subunits to proton translocation. Functionally, this protein is part of the stalk that links CF(0) to CF(1). It either transmits conformational changes from CF(0) to CF(1) or is implicated in proton conduction. This Salmonella agona (strain SL483) protein is ATP synthase subunit delta.